A 416-amino-acid polypeptide reads, in one-letter code: Choline/ethanolaminephosphotransferase 1 (416 aa).

Positions 1–20 (MSGHRSTRKRCGDSHPESPV) are disordered. Ser18 carries the post-translational modification Phosphoserine. Position 40 is a phosphothreonine (Thr40). Residue Asn86 participates in CDP-choline binding. Transmembrane regions (helical) follow at residues 89–108 (TIIGLSINICTTILLVFYCP) and 116–133 (LWAYIACACGLFIYQSLD). A Mg(2+)-binding site is contributed by Asp133. The N-linked (GlcNAc...) asparagine glycan is linked to Asn144. Glu151 lines the CDP-choline pocket. Residue Asp154 coordinates Mg(2+). Catalysis depends on His155, which acts as the Proton acceptor. Transmembrane regions (helical) follow at residues 156-176 (GCDSLSTVFVVLGTCIAVQLG), 180-199 (DWMFFCCFAGTFMFYCAHWQ), 210-230 (IIDVTEVQIFIIIMHLLAVIG), 246-267 (MKLFPALCTVAGTIFSCTNYFR), 286-306 (VLSPFLHIGSVITLAVMIYKK), 315-334 (HPCLYILTFGFVSAKITNKL), 349-363 (TAFIGPALLFLDQYF), and 368-388 (DEYIVLWIALVFSFFDLIRYC). Residue Asp158 participates in Mg(2+) binding.

This sequence belongs to the CDP-alcohol phosphatidyltransferase class-I family. Homodimer. The cofactor is Mg(2+). Mn(2+) serves as cofactor.

The protein localises to the endoplasmic reticulum membrane. It localises to the nucleus membrane. It carries out the reaction CDP-ethanolamine + a 1,2-diacyl-sn-glycerol = a 1,2-diacyl-sn-glycero-3-phosphoethanolamine + CMP + H(+). The catalysed reaction is CDP-choline + a 1,2-diacyl-sn-glycerol = a 1,2-diacyl-sn-glycero-3-phosphocholine + CMP + H(+). The enzyme catalyses 1-O-alkyl-2-acyl-sn-glycerol + CDP-choline = a 1-O-alkyl-2-acyl-sn-glycero-3-phosphocholine + CMP + H(+). It catalyses the reaction a 1-O-(1Z-alkenyl)-2-acyl-sn-glycerol + CDP-choline = a 1-O-(1Z-alkenyl)-2-acyl-sn-glycero-3-phosphocholine + CMP + H(+). It carries out the reaction 1,2-dioctanoyl-sn-glycerol + CDP-choline = 1,2-dioctanoyl-sn-glycero-3-phosphocholine + CMP + H(+). The catalysed reaction is 1,2-didecanoyl-sn-glycerol + CDP-choline = 1,2-didecanoyl-sn-glycero-3-phosphocholine + CMP + H(+). The enzyme catalyses CDP-choline + 1,2-di-(9Z-octadecenoyl)-sn-glycerol = 1,2-di-(9Z-octadecenoyl)-sn-glycero-3-phosphocholine + CMP + H(+). It catalyses the reaction 1-hexadecanoyl-2-(9Z-octadecenoyl)-sn-glycerol + CDP-choline = 1-hexadecanoyl-2-(9Z-octadecenoyl)-sn-glycero-3-phosphocholine + CMP + H(+). It carries out the reaction CDP-ethanolamine + 1,2-di-(9Z-octadecenoyl)-sn-glycerol = 1,2-di-(9Z-octadecenoyl)-sn-glycero-3-phosphoethanolamine + CMP + H(+). The catalysed reaction is 1-hexadecanoyl-2-(9Z-octadecenoyl)-sn-glycerol + CDP-ethanolamine = 1-hexadecanoyl-2-(9Z-octadecenoyl)-sn-glycero-3-phosphoethanolamine + CMP + H(+). The enzyme catalyses 1-hexadecanoyl-2-(4Z,7Z,10Z,13Z,16Z,19Z-docosahexaenoyl)-sn-glycerol + CDP-choline = 1-hexadecanoyl-2-(4Z,7Z,10Z,13Z,16Z,19Z-docosahexaenoyl)-sn-glycero-3-phosphocholine + CMP + H(+). It catalyses the reaction 1,2-di-(9Z-hexadecenoyl)-sn-glycerol + CDP-choline = 1,2-di-(9Z-hexadecenoyl)-sn-glycero-3-phosphocholine + CMP + H(+). It carries out the reaction 1,2-di-(9Z-hexadecenoyl)-sn-glycerol + CDP-ethanolamine = 1,2-di-(9Z-hexadecenoyl)-sn-glycero-3-phosphoethanolamine + CMP + H(+). The catalysed reaction is 1-O-hexadecyl-2-acetyl-sn-glycerol + CDP-choline = 1-O-hexadecyl-2-acetyl-sn-glycero-3-phosphocholine + CMP + H(+). The enzyme catalyses 1-O-hexadecyl-2-(5Z,8Z,11Z,14Z-eicosatetraenoyl)-sn-glycerol + CDP-choline = 1-O-hexadecyl-2-(5Z,8Z,11Z,14Z)-eicosatetraenoyl-sn-glycero-3-phosphocholine + CMP + H(+). The protein operates within phospholipid metabolism; phosphatidylethanolamine biosynthesis; phosphatidylethanolamine from ethanolamine: step 3/3. Its pathway is phospholipid metabolism; phosphatidylcholine biosynthesis; phosphatidylcholine from phosphocholine: step 2/2. In terms of biological role, catalyzes both phosphatidylcholine and phosphatidylethanolamine biosynthesis from CDP-choline and CDP-ethanolamine, respectively. Involved in protein-dependent process of phospholipid transport to distribute phosphatidyl choline to the lumenal surface. Has a higher cholinephosphotransferase activity than ethanolaminephosphotransferase activity. This chain is Choline/ethanolaminephosphotransferase 1, found in Rattus norvegicus (Rat).